We begin with the raw amino-acid sequence, 339 residues long: Heat-inducible transcription repressor HrcA (339 aa).

This sequence belongs to the HrcA family.

Negative regulator of class I heat shock genes (grpE-dnaK-dnaJ and groELS operons). Prevents heat-shock induction of these operons. This chain is Heat-inducible transcription repressor HrcA, found in Clostridium perfringens (strain 13 / Type A).